The sequence spans 325 residues: Germination protease (325 aa).

The propeptide occupies 1-7 (MYNVRTD).

Belongs to the peptidase A25 family. In terms of assembly, homotetramer. In terms of processing, autoproteolytically processed. The inactive tetrameric zymogen termed p46 autoprocesses to a smaller form termed p41, which is active only during spore germination.

It catalyses the reaction Endopeptidase action with P4 Glu or Asp, P1 preferably Glu &gt; Asp, P1' hydrophobic and P2' Ala.. Initiates the rapid degradation of small, acid-soluble proteins during spore germination. The chain is Germination protease from Clostridium perfringens (strain ATCC 13124 / DSM 756 / JCM 1290 / NCIMB 6125 / NCTC 8237 / Type A).